The following is a 184-amino-acid chain: Ribonuclease HII (184 aa).

The region spanning 2–184 is the RNase H type-2 domain; it reads AKICGIDEAG…KPKLAQSSLF (183 aa). Positions 8, 9, and 95 each coordinate a divalent metal cation.

It belongs to the RNase HII family. Requires Mn(2+) as cofactor. It depends on Mg(2+) as a cofactor.

It is found in the cytoplasm. The enzyme catalyses Endonucleolytic cleavage to 5'-phosphomonoester.. Functionally, endonuclease that specifically degrades the RNA of RNA-DNA hybrids. This chain is Ribonuclease HII, found in Campylobacter concisus (strain 13826).